Here is a 500-residue protein sequence, read N- to C-terminus: L-aspartate semialdehyde sulfurtransferase (500 aa).

Cys-131 (cysteine persulfide intermediate) is an active-site residue. 2 CBS domains span residues 384 to 441 (MADF…IFDS) and 446 to 500 (MTKK…ARRY).

The protein belongs to the L-aspartate semialdehyde sulfurtransferase family. Forms homodimers. May form a complex with MA_1822.

It catalyses the reaction L-aspartate 4-semialdehyde + reduced 2[4Fe-4S]-[ferredoxin] + hydrogen sulfide + 3 H(+) = oxidized 2[4Fe-4S]-[ferredoxin] + L-homocysteine + H2O. The protein operates within amino-acid biosynthesis. In terms of biological role, required for O-acetylhomoserine sulfhydrylase (OAHS)-independent homocysteine (Hcy) biosynthesis. Together with MA_1822, catalyzes the condensation of sulfide with aspartate semialdehyde to generate homocysteine. Likely functions through persulfide intermediate. This chain is L-aspartate semialdehyde sulfurtransferase, found in Methanosarcina acetivorans (strain ATCC 35395 / DSM 2834 / JCM 12185 / C2A).